The primary structure comprises 264 residues: tRNA (guanine-N(1)-)-methyltransferase (264 aa).

S-adenosyl-L-methionine is bound by residues Gly-133 and 152–157 (LGDFVM). The segment covering 240–251 (QRRPDLWRKARG) has biased composition (basic and acidic residues). The tract at residues 240–264 (QRRPDLWRKARGGEPPADESGEVRR) is disordered. The span at 255–264 (PADESGEVRR) shows a compositional bias: acidic residues.

This sequence belongs to the RNA methyltransferase TrmD family. Homodimer.

The protein localises to the cytoplasm. The catalysed reaction is guanosine(37) in tRNA + S-adenosyl-L-methionine = N(1)-methylguanosine(37) in tRNA + S-adenosyl-L-homocysteine + H(+). In terms of biological role, specifically methylates guanosine-37 in various tRNAs. The chain is tRNA (guanine-N(1)-)-methyltransferase from Sorangium cellulosum (strain So ce56) (Polyangium cellulosum (strain So ce56)).